The chain runs to 512 residues: Lysine--tRNA ligase (512 aa).

The Mg(2+) site is built by glutamate 422 and glutamate 429.

It belongs to the class-II aminoacyl-tRNA synthetase family. In terms of assembly, homodimer. Mg(2+) serves as cofactor.

The protein resides in the cytoplasm. It catalyses the reaction tRNA(Lys) + L-lysine + ATP = L-lysyl-tRNA(Lys) + AMP + diphosphate. This is Lysine--tRNA ligase from Paraburkholderia phymatum (strain DSM 17167 / CIP 108236 / LMG 21445 / STM815) (Burkholderia phymatum).